The sequence spans 717 residues: MAARGRLVVARGNRSFSSIIRKYSLKRETNKKVIKNVIKLLTMVILMGTVVIWIMMPTSTYKKIWLKSMRAKLGKSIYFGKPGVNLLVYMFPMILLASLGSIYLHLKKQTRVNQFNSRMDRKKIDKFGALKRPMLVKAGLGIVTVTEVMFLMMFMALLLWSLANYFYHTFVTITPQSLPTDGDNLWQARLDSIAVRLGLTGNICLGFLFYPVARGSSLLAAVGLTSESSTKYHIWLGNLVMTLFTSHGLCYCIYWISTNQVSQMLEWDRTGISHLAGEIALVAGLLMWATTFPAIRRRFFEVFFYTHYLYMVFMLFFVFHVGISYALISFPGFYIFMVDRFLRFLQSRNNVKLVSARVLPCETVELNFSKNPMLMYSPTSILFVNIPSISKLQWHPFTITSSSKLEPKKLSVMIKSQGKWSSKLHHMLASSNQIDHLAVSVEGPYGPASTDYLRHDSLVMVSGGSGITPFISIIRDLLYVSSTNAYKTPKITLICAFKNSSDLSMLNLILPNSTEISSFIDIQIKAFVTREKVSTCNMNIIKTLSFKPYVSDQPISPILGPNSWLWLATILSSSFMIFIIIIAIISRYHIYPIDQSSKEYTSAYTSLIYLLAISISVVATSTVAMLCNKKSYFKGLYQNVDALSPLMIESSPDQLLPEFTNIHYGERPNLNKLLVGLKGSSVGVLVCGPRKMREEVAKICSFGSAANLQFESISFNW.

The transit peptide at 1–23 directs the protein to the mitochondrion; the sequence is MAARGRLVVARGNRSFSSIIRKY. Helical transmembrane passes span 40 to 59, 86 to 104, 140 to 163, 232 to 255, 306 to 330, and 353 to 373; these read LLTMVILMGTVVIWIMMPTS, LLVYMFPMILLASLGSIYL, LGIVTVTEVMFLMMFMALLLWSLA, YHIWLGNLVMTLFTSHGLCYCIYW, THYLYMVFMLFFVFHVGISYALISF, and LVSARVLPCETVELNFSKNPM. The Ferric oxidoreductase domain occupies 198–317; sequence GLTGNICLGF…YLYMVFMLFF (120 aa). Residues His233, His247, His307, and His320 each contribute to the heme site. Residues 346–451 enclose the FAD-binding FR-type domain; the sequence is QSRNNVKLVS…EGPYGPASTD (106 aa). 395 to 398 serves as a coordination point for FAD; sequence HPFT. An NAD(+)-binding site is contributed by 443-446; sequence GPYG. 2 helical membrane-spanning segments follow: residues 564 to 586 and 606 to 627; these read WLWLATILSSSFMIFIIIIAIIS and SLIYLLAISISVVATSTVAMLC.

It belongs to the ferric reductase (FRE) family. FAD is required as a cofactor. As to expression, expressed in root steele. Detected in shoots, leaves, stems, siliques, flowers and cotyledons.

It is found in the mitochondrion membrane. The catalysed reaction is 2 a Fe(II)-siderophore + NAD(+) + H(+) = 2 a Fe(III)-siderophore + NADH. Ferric chelate reductase involved in iron reduction in roots. May participate in the transport of electrons to a Fe(3+) ion via FAD and heme intermediates. This chain is Ferric reduction oxidase 3, mitochondrial (FRO3), found in Arabidopsis thaliana (Mouse-ear cress).